A 168-amino-acid polypeptide reads, in one-letter code: MLPSALLRRPGLGRLVRQVRLYAEAAAAQAPAAGPGQMSFTFASPTQVFFNSANVRQVDVPTQTGAFGILAAHVPTLQVLRPGLVVVHAEDGTTSKYFVSSGSVTVNADSSVQLLAEEAVTLDMLDLGAAKANLEKAQSELLGAADEATRAEIQIRIEANEALVKALE.

A mitochondrion-targeting transit peptide spans 1-22 (MLPSALLRRPGLGRLVRQVRLY). N6-acetyllysine; alternate occurs at positions 136 and 165. N6-succinyllysine; alternate occurs at positions 136 and 165.

Belongs to the ATPase epsilon chain family. As to quaternary structure, component of the ATP synthase complex composed at least of ATP5F1A/subunit alpha, ATP5F1B/subunit beta, ATP5MC1/subunit c (homooctomer), MT-ATP6/subunit a, MT-ATP8/subunit 8, ATP5ME/subunit e, ATP5MF/subunit f, ATP5MG/subunit g, ATP5MK/subunit k, ATP5MJ/subunit j, ATP5F1C/subunit gamma, ATP5F1D/subunit delta, ATP5F1E/subunit epsilon, ATP5PF/subunit F6, ATP5PB/subunit b, ATP5PD/subunit d, ATP5PO/subunit OSCP. ATP synthase complex consists of a soluble F(1) head domain (subunits alpha(3) and beta(3)) - the catalytic core - and a membrane F(0) domain - the membrane proton channel (subunits c, a, 8, e, f, g, k and j). These two domains are linked by a central stalk (subunits gamma, delta, and epsilon) rotating inside the F1 region and a stationary peripheral stalk (subunits F6, b, d, and OSCP). Component of a complex composed at least by ATPIF1, ATP5F1A, ATP5F1B, ATP5F1C AND ATP5F1E.

Its subcellular location is the mitochondrion. It localises to the mitochondrion inner membrane. In terms of biological role, subunit delta, of the mitochondrial membrane ATP synthase complex (F(1)F(0) ATP synthase or Complex V) that produces ATP from ADP in the presence of a proton gradient across the membrane which is generated by electron transport complexes of the respiratory chain. ATP synthase complex consist of a soluble F(1) head domain - the catalytic core - and a membrane F(1) domain - the membrane proton channel. These two domains are linked by a central stalk rotating inside the F(1) region and a stationary peripheral stalk. During catalysis, ATP synthesis in the catalytic domain of F(1) is coupled via a rotary mechanism of the central stalk subunits to proton translocation. In vivo, can only synthesize ATP although its ATP hydrolase activity can be activated artificially in vitro. With the central stalk subunit gamma, is essential for the biogenesis of F(1) catalytic part of the ATP synthase complex namely in the formation of F1 assembly intermediate. The sequence is that of ATP synthase F(1) complex subunit delta, mitochondrial from Bos taurus (Bovine).